Here is a 514-residue protein sequence, read N- to C-terminus: 2-isopropylmalate synthase (514 aa).

The Pyruvate carboxyltransferase domain occupies leucine 5 to valine 268. 4 residues coordinate Mn(2+): aspartate 14, histidine 202, histidine 204, and asparagine 239. Residues lysine 395 to serine 514 are regulatory domain.

Belongs to the alpha-IPM synthase/homocitrate synthase family. LeuA type 1 subfamily. In terms of assembly, homodimer. Requires Mn(2+) as cofactor.

Its subcellular location is the cytoplasm. It carries out the reaction 3-methyl-2-oxobutanoate + acetyl-CoA + H2O = (2S)-2-isopropylmalate + CoA + H(+). It functions in the pathway amino-acid biosynthesis; L-leucine biosynthesis; L-leucine from 3-methyl-2-oxobutanoate: step 1/4. Catalyzes the condensation of the acetyl group of acetyl-CoA with 3-methyl-2-oxobutanoate (2-ketoisovalerate) to form 3-carboxy-3-hydroxy-4-methylpentanoate (2-isopropylmalate). The polypeptide is 2-isopropylmalate synthase (Burkholderia cenocepacia (strain ATCC BAA-245 / DSM 16553 / LMG 16656 / NCTC 13227 / J2315 / CF5610) (Burkholderia cepacia (strain J2315))).